A 212-amino-acid polypeptide reads, in one-letter code: Ribosomal RNA small subunit methyltransferase G (212 aa).

S-adenosyl-L-methionine contacts are provided by residues G80, L85, 131-132 (AE), and R146.

It belongs to the methyltransferase superfamily. RNA methyltransferase RsmG family.

It localises to the cytoplasm. The catalysed reaction is guanosine(527) in 16S rRNA + S-adenosyl-L-methionine = N(7)-methylguanosine(527) in 16S rRNA + S-adenosyl-L-homocysteine. Its function is as follows. Specifically methylates the N7 position of guanine in position 527 of 16S rRNA. This chain is Ribosomal RNA small subunit methyltransferase G, found in Stenotrophomonas maltophilia (strain R551-3).